The following is a 716-amino-acid chain: Hepatocyte growth factor-like protein (716 aa).

Positions 1–18 (MGWLPLLLLLVQCSRALG) are cleaved as a signal peptide. Positions 19-105 (QRSPLNDFQL…SLCHLFQKKD (87 aa)) constitute a PAN domain. 20 disulfides stabilise this stretch: cysteine 56–cysteine 78, cysteine 60–cysteine 66, cysteine 110–cysteine 186, cysteine 131–cysteine 169, cysteine 157–cysteine 181, cysteine 191–cysteine 268, cysteine 194–cysteine 333, cysteine 212–cysteine 251, cysteine 240–cysteine 263, cysteine 292–cysteine 370, cysteine 313–cysteine 352, cysteine 341–cysteine 364, cysteine 379–cysteine 457, cysteine 400–cysteine 440, cysteine 428–cysteine 452, cysteine 477–cysteine 593, cysteine 512–cysteine 528, cysteine 607–cysteine 672, cysteine 637–cysteine 651, and cysteine 662–cysteine 690. The N-linked (GlcNAc...) asparagine glycan is linked to asparagine 72. 4 Kringle domains span residues 110–186 (CIMD…IKTC), 191–268 (CVLC…LPSC), 292–370 (CFRG…IPRC), and 379–457 (CYHG…LQRC). Residue asparagine 173 is glycosylated (N-linked (GlcNAc...) asparagine). A glycan (N-linked (GlcNAc...) asparagine) is linked at asparagine 305. The Peptidase S1 domain occupies 489–714 (VVGGHPGNSP…FVDWINKVMQ (226 aa)). N-linked (GlcNAc...) asparagine glycosylation occurs at asparagine 620.

This sequence belongs to the peptidase S1 family. Plasminogen subfamily. Dimer of an alpha chain and a beta chain linked by a disulfide bond. Interacts (via beta chain) with MST1R (via SEMA domain). Cleaved after Arg-488, probably by HPN/Hepsin, to yield the active form consisting of two disulfide-linked chains. In terms of tissue distribution, liver. Lower levels in lung, placenta and adrenal.

The protein localises to the secreted. The chain is Hepatocyte growth factor-like protein (Mst1) from Mus musculus (Mouse).